Consider the following 399-residue polypeptide: Chromosomal replication initiator protein DnaA (399 aa).

Residues 1–64 (MELNALIKKI…EEEVRKLIEV (64 aa)) form a domain I, interacts with DnaA modulators region. Residues 64–77 (VKEKEEKKKVEIKD) form a domain II region. The tract at residues 78 to 290 (FLNPKYTLEN…GKIKLIKLKG (213 aa)) is domain III, AAA+ region. 8 residues coordinate ADP: I89, N94, G122, T123, G124, K125, T126, and H127. I89 provides a ligand contact to ATP. G122 lines the ATP pocket. Residues G124, K125, T126, and H127 each contribute to the ATP site. T126 contacts Mg(2+). V156 contacts ssDNA. D180 serves as a coordination point for ATP. D181 provides a ligand contact to Mg(2+). SsDNA-binding residues include K188, R190, and T191. Residue R277 coordinates ATP. A domain IV, binds dsDNA region spans residues 291–399 (FEGLERKERK…LEKQAFDKIC (109 aa)).

The protein belongs to the DnaA family. In the presence of ATP analog AMP-PCP forms a linear, right-handed spiral filament with 4 subunits arranged head-to-tail, about 122 Angstroms wide and about 360 Angstroms long. Mg(2+)-AMP-PCP binds at the subunit interface with the gamma phosphate coordinated by adjacent subunits. dsDNA probably wraps on the outside of the filament. ssDNA binds to the center of the helical filament via the AAA+ domain, which stretches the DNA.

The protein resides in the cytoplasm. In terms of biological role, plays an essential role in the initiation and regulation of chromosomal replication. ATP-DnaA binds to the origin of replication (oriC) to initiate formation of the DNA replication initiation complex once per cell cycle. Binds the DnaA box (a 9 base pair repeat at the origin) and separates the double-stranded (ds)DNA. Forms a right-handed helical filament on oriC DNA; dsDNA binds to the exterior of the filament while single-stranded (ss)DNA is stabiized in the filament's interior. The ATP-DnaA-oriC complex binds and stabilizes one strand of the AT-rich DNA unwinding element (DUE), permitting loading of DNA polymerase. After initiation quickly degrades to an ADP-DnaA complex that is not apt for DNA replication. Binds acidic phospholipids. Functionally, able to melt short unstable dsDNA (15-mer with melting temperature, TM, 43 degrees Celsius) in the presence of a non-hydrolyzable ATP analog; a more stable dsDNA (20-mer, TM 55 degrees Celsius) is poor substrate. ADP does not support dsDNA melting. Addition of DnaA-AMP-PCP (an ATP analog, beta,gamma-methyleneadenosine 5'-triphosphate) to an oric-containing plasmid causes a DNA shift to more positively supercoiled topological species, stabilizing a positive wrap and right-handed filament as seen in the crystal structure without DNA. Filament formation generated by positive supercoiling may destabilize the origin unwinding element through compensatory negative supercoiling strain. This chain is Chromosomal replication initiator protein DnaA, found in Aquifex aeolicus (strain VF5).